The primary structure comprises 2703 residues: Serine/arginine repetitive matrix protein 2 (2703 aa).

An N-acetylmethionine modification is found at Met1. Positions 60 to 92 (HERKRRVELRCLELEEMMEEQGYEEQQIQEKVA) form a coiled coil. N6-acetyllysine is present on Lys101. Glycyl lysine isopeptide (Lys-Gly) (interchain with G-Cter in SUMO2) cross-links involve residues Lys108 and Lys130. Residues 141 to 1007 (ISDSYVDGSS…SGSFHLCPGV (867 aa)) form a disordered region. Tyr145 carries the phosphotyrosine modification. Position 169 is an N6-acetyllysine (Lys169). 2 stretches are compositionally biased toward basic residues: residues 186-197 (KQKKKKKKKDRG) and 207-249 (RERK…KRSR). A sufficient for RNA-binding region spans residues 197 to 259 (GRRSESSSPR…STTPAPKSRR (63 aa)). A phosphoserine mark is found at Ser220 and Ser222. Positions 263–284 (STSADSASSSDTSRSRSRSAAA) are enriched in low complexity. Phosphoserine occurs at positions 295, 300, 310, 322, and 323. Residues 319-334 (QQPSSPAPSTKQSSSP) are compositionally biased toward low complexity. A compositionally biased stretch (basic and acidic residues) spans 335-345 (YEDKDKKEKSA). Residues Ser349, Ser351, Ser355, and Ser356 each carry the phosphoserine modification. 2 positions are modified to phosphothreonine: Thr357 and Thr365. Ser375, Ser385, Ser393, Ser396, Ser402, Ser406, Ser422, Ser433, Ser434, Ser435, Ser438, Ser452, Ser482, Ser484, Ser503, Ser505, Ser507, Ser531, Ser533, and Ser540 each carry phosphoserine. The segment covering 383-396 (PSSQEPVNPSSEAS) has biased composition (polar residues). A compositionally biased stretch (polar residues) spans 425 to 437 (PTKGSRHASSSPE). Basic residues predominate over residues 459–533 (NRSHGRAKRD…SPQRRGRSRS (75 aa)). Residues 534-543 (PQRPGWSRSR) are compositionally biased toward low complexity. Composition is skewed to basic residues over residues 544–561 (NTQR…RSHS), 568–721 (GRSR…RRGR), and 730–740 (NKSRTSQRRSR). A phosphoserine mark is found at Ser700, Ser702, and Ser704. A phosphoserine mark is found at Ser773, Ser775, and Ser778. Residues 785 to 817 (SQTPTRRSRSGSSPPKQKSKTPPRQSRSNSPQP) show a composition bias toward low complexity. Ser821 and Ser829 each carry phosphoserine. 2 stretches are compositionally biased toward polar residues: residues 829 to 851 (SVTN…SESS) and 859 to 874 (RTPS…PRVK). Phosphothreonine occurs at positions 831 and 841. Phosphoserine occurs at positions 846, 850, and 851. 2 stretches are compositionally biased toward low complexity: residues 875-891 (SSTP…SPQP) and 898-919 (SPRG…TSRT). Residues Ser882, Ser909, Ser924, Ser926, Ser928, Ser940, Ser942, Ser944, Ser945, Ser946, and Ser949 each carry the phosphoserine modification. Thr955 is modified (phosphothreonine). Residues 960-1000 (SGSTSPYLKSMLQTPPDQNLSGSKSPCPQKSRDSPTGSSGS) are compositionally biased toward polar residues. Phosphoserine is present on residues Ser962 and Ser964. Tyr966 is modified (phosphotyrosine). Position 973 is a phosphothreonine (Thr973). A phosphoserine mark is found at Ser980, Ser984, and Ser993. Residue Thr995 is modified to Phosphothreonine. Ser997, Ser1000, Ser1011, Ser1037, and Ser1038 each carry phosphoserine. The span at 1024–1057 (VQQKGHTQTWPDTSSPEVMQTQVESPLLQSKSQT) shows a compositional bias: polar residues. The disordered stretch occupies residues 1024–1112 (VQQKGHTQTW…TKPDSSIYPL (89 aa)). Residue Thr1044 is modified to Phosphothreonine. A phosphoserine mark is found at Ser1048, Ser1064, Ser1066, Ser1067, and Ser1068. Over residues 1058–1068 (SPKGSLSRSSS) the composition is skewed to low complexity. Thr1071 is modified (phosphothreonine). Phosphoserine is present on residues Ser1077, Ser1087, Ser1094, Ser1097, Ser1117, Ser1151, Ser1159, Ser1175, Ser1188, Ser1216, Ser1225, Ser1229, Ser1230, Ser1269, Ser1276, Ser1278, Ser1284, Ser1287, Ser1294, Ser1305, Ser1325, Ser1338, Ser1339, Ser1340, Ser1343, Ser1359, and Ser1360. Residues 1079 to 1092 (VKQDKSEISTDPKL) show a composition bias toward basic and acidic residues. Positions 1136–2092 (IQEDVASSCI…RSPGMLEPLG (957 aa)) are disordered. Over residues 1146-1158 (PRDKFSPTQDRPE) the composition is skewed to basic and acidic residues. Basic and acidic residues predominate over residues 1270 to 1284 (PEHKELSHSPPRENS). The segment covering 1285-1304 (FESSLEFKNSGPVSEVNTGF) has biased composition (polar residues). At Thr1370 the chain carries Phosphothreonine. Residues 1371-1387 (PSRERSSSASPELKDGL) show a composition bias toward basic and acidic residues. Phosphoserine is present on residues Ser1372, Ser1378, and Ser1380. Thr1390 carries the phosphothreonine modification. Residues 1397 to 1408 (SGSSPGLRDGSG) show a composition bias toward low complexity. Phosphoserine occurs at positions 1400 and 1407. At Thr1409 the chain carries Phosphothreonine. The segment covering 1409–1431 (TPSRHSLSGSSPGMKDTPQTPSR) has biased composition (polar residues). Phosphoserine occurs at positions 1414, 1416, 1418, and 1419. The residue at position 1428 (Thr1428) is a Phosphothreonine. 2 positions are modified to phosphoserine: Ser1438 and Ser1439. Thr1448 carries the post-translational modification Phosphothreonine. 5 positions are modified to phosphoserine: Ser1453, Ser1455, Ser1457, Ser1458, and Ser1465. Positions 1454–1468 (HSPSSPERNNKSVTP) are enriched in polar residues. At Thr1467 the chain carries Phosphothreonine. Phosphoserine occurs at positions 1473, 1475, 1477, and 1478. A compositionally biased stretch (polar residues) spans 1475–1489 (SESSVEQKNLARTSP). Thr1487 carries the phosphothreonine modification. Over residues 1490-1499 (GQRSRSGSSQ) the composition is skewed to low complexity. Phosphoserine occurs at positions 1493, 1495, 1497, 1498, and 1508. The segment covering 1511-1523 (ERSESDSSPDSKP) has biased composition (basic and acidic residues). Residues 1524–1533 (KTRTPLRQRS) are compositionally biased toward basic residues. Phosphoserine occurs at positions 1533, 1535, 1537, 1538, 1554, 1556, 1557, 1572, 1576, 1577, 1604, 1614, 1647, 1649, and 1650. Low complexity predominate over residues 1604–1613 (SPEGSSSSES). Residues 1637-1647 (KSHTPPRRRSS) are compositionally biased toward basic residues. Thr1654 is modified (phosphothreonine). 6 positions are modified to phosphoserine: Ser1683, Ser1685, Ser1687, Ser1688, Ser1718, and Ser1720. Composition is skewed to basic residues over residues 1725-1745 (GLQR…RRRD) and 1754-1772 (SRRR…RRRG). Residues Ser1774, Ser1778, Ser1810, Ser1813, Ser1832, and Ser1834 each carry the phosphoserine modification. The span at 1776–1789 (YHSRSPTRQESSRT) shows a compositional bias: low complexity. The span at 1790–1810 (SSRRRRGRSRTPLTSRKRSRS) shows a compositional bias: basic residues. The span at 1818-2020 (KRSRSRASPA…PRAARGKRSL (203 aa)) shows a compositional bias: basic residues. Position 1836 is a phosphothreonine (Thr1836). Phosphoserine occurs at positions 1840 and 1846. Residue Thr1848 is modified to Phosphothreonine. Phosphoserine is present on residues Ser1849, Ser1869, Ser1872, Ser1876, and Ser1878. Phosphothreonine occurs at positions 1880 and 1884. Residues Ser1898 and Ser1900 each carry the phosphoserine modification. 2 positions are modified to phosphothreonine: Thr1902 and Thr1906. 2 positions are modified to phosphoserine: Ser1910 and Ser1912. A phosphothreonine mark is found at Thr1914 and Thr1918. 3 positions are modified to phosphoserine: Ser1922, Ser1924, and Ser1927. Thr1930 carries the post-translational modification Phosphothreonine. A phosphoserine mark is found at Ser1936, Ser1939, Ser1948, Ser1951, Ser1960, Ser1963, Ser1970, and Ser1972. A Phosphothreonine modification is found at Thr1974. Ser1982 and Ser1984 each carry phosphoserine. At Thr1986 the chain carries Phosphothreonine. 4 positions are modified to phosphoserine: Ser1994, Ser1996, Ser1998, and Ser2019. Thr2021 carries the phosphothreonine modification. Positions 2022–2047 (RSPPAIRRRSASGSSSDRSRSATPPA) are enriched in low complexity. Phosphoserine occurs at positions 2023 and 2042. Thr2044 carries the phosphothreonine modification. Phosphoserine is present on residues Ser2052 and Ser2054. Phosphothreonine is present on Thr2056. Residues 2062–2076 (SSSRMSCFSRPSMSP) are compositionally biased toward low complexity. Ser2070, Ser2073, Ser2075, and Ser2084 each carry phosphoserine. Thr2096 carries the post-translational modification Phosphothreonine. Omega-N-methylarginine is present on residues Arg2146, Arg2159, Arg2183, and Arg2198. Ser2224 carries the post-translational modification Phosphoserine. Residues Arg2226 and Arg2240 each carry the omega-N-methylarginine modification. A phosphothreonine mark is found at Thr2241 and Thr2254. Ser2262 is modified (phosphoserine). Residues 2263 to 2703 (LTGSGTPPTA…SNRHRSSRSP (441 aa)) form a disordered region. Residues Thr2268 and Thr2281 each carry the phosphothreonine modification. Residues 2269–2283 (PPTAANYPSSSRTPQ) show a composition bias toward polar residues. Position 2295 is an omega-N-methylarginine (Arg2295). Phosphoserine occurs at positions 2296, 2321, and 2329. Phosphothreonine is present on Thr2334. Ser2335 carries the post-translational modification Phosphoserine. Arg2337 is subject to Asymmetric dimethylarginine; alternate. Residue Arg2337 is modified to Omega-N-methylarginine; alternate. 3 positions are modified to phosphoserine: Ser2347, Ser2351, and Ser2360. Thr2362 carries the phosphothreonine modification. Residues Ser2365, Ser2368, Ser2381, Ser2384, Ser2404, and Ser2408 each carry the phosphoserine modification. Polar residues-rich tracts occupy residues 2410 to 2443 (FSDQ…SASD) and 2467 to 2476 (TGAQQPSTLA). A compositionally biased stretch (low complexity) spans 2487–2521 (SSSSSSSSSSSSSSSSSSSSSSSSGSSSSDSEGSS). A Phosphoserine modification is found at Ser2535. Thr2537 bears the Phosphothreonine mark. Lys2541 is covalently cross-linked (Glycyl lysine isopeptide (Lys-Gly) (interchain with G-Cter in SUMO2)). Phosphothreonine is present on Thr2553. Positions 2562-2602 (SSSSSSSSSSSSSSSSSSSSSSSSSSSSSSSSSSSSSSSSS) are enriched in low complexity. The span at 2605 to 2622 (PAKPGPQALPKPASPKKP) shows a compositional bias: pro residues. Ser2618, Ser2629, Ser2631, Ser2638, Ser2642, Ser2644, Ser2646, Ser2648, Ser2656, and Ser2660 each carry phosphoserine. Over residues 2623–2643 (PPGERRSRSPRKPIDSLRDSR) the composition is skewed to basic and acidic residues. The residue at position 2689 (Thr2689) is a Phosphothreonine. Ser2691 is modified (phosphoserine). A compositionally biased stretch (basic residues) spans 2694–2703 (SNRHRSSRSP).

This sequence belongs to the CWC21 family. Component of pre-catalytic, catalytic and post-catalytic spliceosome complexes. Found in a pre-mRNA splicing complex with SFRS4, SFRS5, SNRP70, SNRPA1, SRRM1 and SRRM2. Component of the minor spliceosome, which splices U12-type introns. Interacts with DHX8. Interacts with CACTIN.

It localises to the nucleus. Its subcellular location is the nucleus speckle. Required for pre-mRNA splicing as component of the spliceosome. As a component of the minor spliceosome, involved in the splicing of U12-type introns in pre-mRNAs. In Mus musculus (Mouse), this protein is Serine/arginine repetitive matrix protein 2 (Srrm2).